The sequence spans 322 residues: Putative integrase ORF3 (322 aa).

One can recognise an Integrase catalytic domain in the interval 153 to 322 (RGKLTDFKSI…SSKEMFLQNI (170 aa)).

The protein belongs to the plectrovirus integrase ORF3 family.

Its function is as follows. This protein may encode an integrase, which is necessary for integration of the viral DNA into host genome. The sequence is that of Putative integrase ORF3 from Spiroplasma virus SpV1-R8A2 B (SpV1).